A 233-amino-acid polypeptide reads, in one-letter code: 28 kDa ribonucleoprotein, chloroplastic (233 aa).

Residues 1-16 are compositionally biased toward polar residues; it reads CVAQTSEWEQEGSTNA. The tract at residues 1–52 is disordered; sequence CVAQTSEWEQEGSTNAVLEGESDPEGAVSWGSETQVSDEGGVEGGQGFSEPP. RRM domains lie at 55–133 and 149–227; these read AKLF…KAAP and CRVY…VAEE.

It localises to the plastid. The protein resides in the chloroplast. Functionally, probably involved in the 3'-end processing of chloroplast mRNA's. In Spinacia oleracea (Spinach), this protein is 28 kDa ribonucleoprotein, chloroplastic.